The following is a 624-amino-acid chain: Heat shock factor protein 5 (624 aa).

The DNA-binding element occupies 11-228 (NPNNFPAKLW…FHRSFRRDNL (218 aa)). 5 disordered regions span residues 52-77 (LSPPGPGAGGAGGAGSSGGGGGSGVG), 112-138 (GAAGPGPGPGAGGPAGDGPLHHFHSPH), 186-214 (SASASTSPLQHQDPPPQPAGPRPEQHGPV), 429-461 (CPSSQANRGQHILPNANSSNPSSTSQASQLEPL), and 572-605 (GPANKSTKDTGLSTPARYRERRSNSQGKSPDLHL). Composition is skewed to gly residues over residues 58 to 77 (GAGGAGGAGSSGGGGGSGVG) and 112 to 127 (GAAGPGPGPGAGGPAG). Low complexity-rich tracts occupy residues 186–197 (SASASTSPLQHQ) and 442–457 (PNANSSNPSSTSQASQ). Serine 600 is subject to Phosphoserine.

It belongs to the HSF family. In terms of assembly, homooligomer. Highly expressed in testis particularly in spermatocytes (at protein level). Not expressed in fetal testis and ovary.

It localises to the nucleus. Its subcellular location is the chromosome. DNA-binding transcription factor that is essential for male fertility, spermatogenesis and meiotic prophase progression in spermatocytes under non-stress conditions. Positvely and negatively regulates gene expression to ensure progression of meiotic prophase beyond pachytene stage in spermatocytes. Plays a role in male germline meiotic sex chromosome remodeling and silencing through regulation of SMARCA4. The sequence is that of Heat shock factor protein 5 (Hsf5) from Mus musculus (Mouse).